The primary structure comprises 100 residues: Putative septation protein SpoVG (100 aa).

The protein belongs to the SpoVG family.

Could be involved in septation. This Staphylococcus aureus (strain MRSA252) protein is Putative septation protein SpoVG.